The primary structure comprises 393 residues: Formate-dependent phosphoribosylglycinamide formyltransferase (393 aa).

N(1)-(5-phospho-beta-D-ribosyl)glycinamide contacts are provided by residues 22-23 (EL) and glutamate 82. Residues arginine 114, lysine 155, 160 to 165 (SSGHGQ), 195 to 198 (EGFI), and glutamate 203 contribute to the ATP site. Residues 119–308 (RLAAEELGLK…QFALHARAIL (190 aa)) form the ATP-grasp domain. Glutamate 267 and glutamate 279 together coordinate Mg(2+). N(1)-(5-phospho-beta-D-ribosyl)glycinamide is bound by residues aspartate 286, lysine 356, and 363–364 (RR).

Belongs to the PurK/PurT family. Homodimer.

The enzyme catalyses N(1)-(5-phospho-beta-D-ribosyl)glycinamide + formate + ATP = N(2)-formyl-N(1)-(5-phospho-beta-D-ribosyl)glycinamide + ADP + phosphate + H(+). It functions in the pathway purine metabolism; IMP biosynthesis via de novo pathway; N(2)-formyl-N(1)-(5-phospho-D-ribosyl)glycinamide from N(1)-(5-phospho-D-ribosyl)glycinamide (formate route): step 1/1. Its function is as follows. Involved in the de novo purine biosynthesis. Catalyzes the transfer of formate to 5-phospho-ribosyl-glycinamide (GAR), producing 5-phospho-ribosyl-N-formylglycinamide (FGAR). Formate is provided by PurU via hydrolysis of 10-formyl-tetrahydrofolate. The protein is Formate-dependent phosphoribosylglycinamide formyltransferase of Actinobacillus pleuropneumoniae serotype 3 (strain JL03).